We begin with the raw amino-acid sequence, 170 residues long: MHIHRTRIVITSSRDPSIRTRNFLNVLTFVLPDSVKITRGKKSKIEIFERAINLGALYLLFVLAKNGNPLRIIVYDLESLSIKYFFKLSGLSLPSDYNVSLNQIKGHSNVCIKLNECDFLRDFLVDMNMYNLTNNCDVVVNSRLIHTNICELLFMLTTKNIKFLKMILEA.

The Brix domain maps to 6–170 (TRIVITSSRD…IKFLKMILEA (165 aa)).

In terms of biological role, probably involved in the biogenesis of the ribosome. This is Probable Brix domain-containing ribosomal biogenesis protein from Saccharolobus solfataricus (strain ATCC 35092 / DSM 1617 / JCM 11322 / P2) (Sulfolobus solfataricus).